The primary structure comprises 229 residues: Putative N-acetylmannosamine-6-phosphate 2-epimerase 2 (229 aa).

The protein belongs to the NanE family.

The enzyme catalyses an N-acyl-D-glucosamine 6-phosphate = an N-acyl-D-mannosamine 6-phosphate. It functions in the pathway amino-sugar metabolism; N-acetylneuraminate degradation; D-fructose 6-phosphate from N-acetylneuraminate: step 3/5. In terms of biological role, converts N-acetylmannosamine-6-phosphate (ManNAc-6-P) to N-acetylglucosamine-6-phosphate (GlcNAc-6-P). The protein is Putative N-acetylmannosamine-6-phosphate 2-epimerase 2 of Salmonella paratyphi A (strain ATCC 9150 / SARB42).